The primary structure comprises 315 residues: Outer membrane protease IcsP (315 aa).

The signal sequence occupies residues 1–20 (MKLKFFVLALCVPAIFTTHA). Active-site residues include aspartate 103, aspartate 105, aspartate 230, and histidine 232.

This sequence belongs to the peptidase A26 family.

The protein localises to the cell outer membrane. Its function is as follows. Protease responsible for the cleavage of IcsA between 'Arg-758' and 'Arg-759', removing the entire alpha domain from IscA localized on the bacterial surface. This proteolytic activity contributes to the maintenance of a tight polar cap of IcsA, which is important to Shigella actin-based motility. The polypeptide is Outer membrane protease IcsP (icsP) (Shigella flexneri).